Here is a 273-residue protein sequence, read N- to C-terminus: MNLRAAGPGWLFCPADRPERFAKAAAAADVVILDLEDGVAEAQKPAARNALRDTPLDPERTVVRINAGGTADQARDLEALAGTAYTTVMLPKAESAAQVIELAPRDVIALVETARGAVCAAEIAAADPTVGMMWGAEDLIATLGGSSSRRADGAYRDVARHVRSTILLAASAFGRLALDAVHLDILDVEGLQEEARDAAAVGFDVTVCIHPSQIPVVRKAYRPSHEKLAWARRVLAASRSERGAFAFEGQMVDSPVLTHAETMLRRAGEATSE.

Substrate is bound by residues arginine 64 and glutamate 112. The Mg(2+) site is built by glutamate 112 and aspartate 138.

This sequence belongs to the HpcH/HpaI aldolase family. Citrate lyase beta subunit-like subfamily. In terms of assembly, homotrimer. Mg(2+) is required as a cofactor.

May play a role in fatty acid biosynthesis. The polypeptide is Citrate lyase subunit beta-like protein (citE) (Mycobacterium tuberculosis (strain CDC 1551 / Oshkosh)).